The chain runs to 290 residues: MADCSALESLIEMGFSPSRAEKALSATGNQGIEPAMDWLVEHEDDPDIKEPSVVIPEDSGTDTTDTTDTQAMDTSAERLPLTEEEKEKQTKRMMELIAQKQKEREEREKRERIEQEKQRRKHGQELSAIKQRMQEQEMQKAAEDRRREKQEERLARERVREKIARDKADRARKFGGAGSEPISPPAETSVPATAPSPSSPVQEPPTKKEYDQCRIQVRLLDGSALSQTFRAREQLAAVRLYVELNWPGGPPEPFSLLTSFPRRVFTEEDMEKPLQELGLVPTAVLIVAKK.

In terms of domain architecture, UBA spans 1–42; that stretch reads MADCSALESLIEMGFSPSRAEKALSATGNQGIEPAMDWLVEH. The disordered stretch occupies residues 49-210; the sequence is KEPSVVIPED…VQEPPTKKEY (162 aa). 2 stretches are compositionally biased toward basic and acidic residues: residues 80–117 and 132–172; these read PLTE…EQEK and RMQE…DRAR. The stretch at 81–171 forms a coiled coil; it reads LTEEEKEKQT…KIARDKADRA (91 aa). Low complexity predominate over residues 185–201; that stretch reads PAETSVPATAPSPSSPV. The 80-residue stretch at 208–287 folds into the UBX domain; the sequence is KEYDQCRIQV…GLVPTAVLIV (80 aa).

It is found in the cytoplasm. Its function is as follows. Component of a complex required to couple deglycosylation and proteasome-mediated degradation of misfolded proteins in the endoplasmic reticulum that are retrotranslocated in the cytosol. Involved in ubiquitin-proteasome systems. In Xenopus laevis (African clawed frog), this protein is UBX domain-containing protein 1-B (ubxn1-b).